The following is a 189-amino-acid chain: Crossover junction endodeoxyribonuclease RuvC (189 aa).

Residues aspartate 7, glutamate 68, and aspartate 141 contribute to the active site. Residues aspartate 7, glutamate 68, and aspartate 141 each coordinate Mg(2+).

The protein belongs to the RuvC family. In terms of assembly, homodimer which binds Holliday junction (HJ) DNA. The HJ becomes 2-fold symmetrical on binding to RuvC with unstacked arms; it has a different conformation from HJ DNA in complex with RuvA. In the full resolvosome a probable DNA-RuvA(4)-RuvB(12)-RuvC(2) complex forms which resolves the HJ. The cofactor is Mg(2+).

The protein resides in the cytoplasm. It catalyses the reaction Endonucleolytic cleavage at a junction such as a reciprocal single-stranded crossover between two homologous DNA duplexes (Holliday junction).. Its function is as follows. The RuvA-RuvB-RuvC complex processes Holliday junction (HJ) DNA during genetic recombination and DNA repair. Endonuclease that resolves HJ intermediates. Cleaves cruciform DNA by making single-stranded nicks across the HJ at symmetrical positions within the homologous arms, yielding a 5'-phosphate and a 3'-hydroxyl group; requires a central core of homology in the junction. The consensus cleavage sequence is 5'-(A/T)TT(C/G)-3'. Cleavage occurs on the 3'-side of the TT dinucleotide at the point of strand exchange. HJ branch migration catalyzed by RuvA-RuvB allows RuvC to scan DNA until it finds its consensus sequence, where it cleaves and resolves the cruciform DNA. The chain is Crossover junction endodeoxyribonuclease RuvC from Chlorobium phaeovibrioides (strain DSM 265 / 1930) (Prosthecochloris vibrioformis (strain DSM 265)).